A 387-amino-acid chain; its full sequence is Phosphoglycerate kinase (387 aa).

Substrate is bound by residues 21-23, Arg36, 59-62, Arg113, and Arg146; these read DLN and HLGR. Residues Lys197, Glu314, and 340–343 each bind ATP; that span reads GGDT.

It belongs to the phosphoglycerate kinase family. In terms of assembly, monomer.

The protein resides in the cytoplasm. It catalyses the reaction (2R)-3-phosphoglycerate + ATP = (2R)-3-phospho-glyceroyl phosphate + ADP. Its pathway is carbohydrate degradation; glycolysis; pyruvate from D-glyceraldehyde 3-phosphate: step 2/5. The protein is Phosphoglycerate kinase of Pseudomonas putida (strain ATCC 47054 / DSM 6125 / CFBP 8728 / NCIMB 11950 / KT2440).